Consider the following 212-residue polypeptide: Probable nicotinate-nucleotide adenylyltransferase (212 aa).

Belongs to the NadD family.

It catalyses the reaction nicotinate beta-D-ribonucleotide + ATP + H(+) = deamido-NAD(+) + diphosphate. The protein operates within cofactor biosynthesis; NAD(+) biosynthesis; deamido-NAD(+) from nicotinate D-ribonucleotide: step 1/1. Catalyzes the reversible adenylation of nicotinate mononucleotide (NaMN) to nicotinic acid adenine dinucleotide (NaAD). The protein is Probable nicotinate-nucleotide adenylyltransferase of Shewanella sp. (strain MR-7).